We begin with the raw amino-acid sequence, 217 residues long: 3,4-dihydroxy-2-butanone 4-phosphate synthase (217 aa).

D-ribulose 5-phosphate-binding positions include Arg-37–Glu-38, Asp-42, Arg-150–Thr-154, and Glu-174. Glu-38 serves as a coordination point for Mg(2+). His-153 is a binding site for Mg(2+).

The protein belongs to the DHBP synthase family. In terms of assembly, homodimer. Requires Mg(2+) as cofactor. The cofactor is Mn(2+).

It catalyses the reaction D-ribulose 5-phosphate = (2S)-2-hydroxy-3-oxobutyl phosphate + formate + H(+). The protein operates within cofactor biosynthesis; riboflavin biosynthesis; 2-hydroxy-3-oxobutyl phosphate from D-ribulose 5-phosphate: step 1/1. Functionally, catalyzes the conversion of D-ribulose 5-phosphate to formate and 3,4-dihydroxy-2-butanone 4-phosphate. The protein is 3,4-dihydroxy-2-butanone 4-phosphate synthase of Shigella boydii serotype 18 (strain CDC 3083-94 / BS512).